Here is a 403-residue protein sequence, read N- to C-terminus: uncharacterized protein (403 aa).

Residues 1–26 form the signal peptide; that stretch reads MYKFKTNLFLVIYFIAIFSIESSISS. The Extracellular portion of the chain corresponds to 27-381; that stretch reads FNTEINSNSN…DSDNSSFGIS (355 aa). 7 N-linked (GlcNAc...) asparagine glycosylation sites follow: asparagine 58, asparagine 90, asparagine 93, asparagine 124, asparagine 137, asparagine 371, and asparagine 375. A helical transmembrane segment spans residues 382 to 402; it reads IQKYLNSFLNSFIIILIINII. A topological domain (cytoplasmic) is located at residue isoleucine 403.

The protein resides in the membrane. This is an uncharacterized protein from Dictyostelium discoideum (Social amoeba).